The sequence spans 191 residues: Neuronal calcium sensor 1 (191 aa).

Gly2 is lipidated: N-myristoyl glycine. EF-hand domains are found at residues Glu24–Gly59, Asp60–Gly95, Thr96–Met131, and Thr144–Ile179. Asp73, Asn75, Asp77, Glu84, Asp109, Asp111, Asp113, Tyr115, Glu120, Asp157, Asn159, Asp161, Gln163, and Glu168 together coordinate Ca(2+).

It belongs to the recoverin family.

It is found in the perikaryon. The protein resides in the cell projection. Its subcellular location is the growth cone. Neuronal calcium sensor, regulator of G protein-coupled receptor phosphorylation in a calcium dependent manner. Regulates neurite extension and branching by activity-dependent Ca(2+) influx in growth cones. In Lymnaea stagnalis (Great pond snail), this protein is Neuronal calcium sensor 1.